The primary structure comprises 669 residues: DNA ligase 2 (669 aa).

NAD(+)-binding positions include 35–39 (DKEYD) and 83–84 (SL). Lys-125 serves as the catalytic N6-AMP-lysine intermediate. NAD(+)-binding residues include Arg-147, Glu-181, and Lys-317. Zn(2+)-binding residues include Cys-410, Cys-413, Cys-426, and Cys-432. Residues 590–669 (VVENAFTGKT…EEFEQLINNM (80 aa)) form the BRCT domain.

Belongs to the NAD-dependent DNA ligase family. LigA subfamily. Requires Mg(2+) as cofactor. The cofactor is Mn(2+).

The enzyme catalyses NAD(+) + (deoxyribonucleotide)n-3'-hydroxyl + 5'-phospho-(deoxyribonucleotide)m = (deoxyribonucleotide)n+m + AMP + beta-nicotinamide D-nucleotide.. Its function is as follows. DNA ligase that catalyzes the formation of phosphodiester linkages between 5'-phosphoryl and 3'-hydroxyl groups in double-stranded DNA using NAD as a coenzyme and as the energy source for the reaction. It is essential for DNA replication and repair of damaged DNA. The sequence is that of DNA ligase 2 from Clostridium acetobutylicum (strain ATCC 824 / DSM 792 / JCM 1419 / IAM 19013 / LMG 5710 / NBRC 13948 / NRRL B-527 / VKM B-1787 / 2291 / W).